The following is a 348-amino-acid chain: MAQAPGIDKSKALEGALSQIERAFGKGSIMRMGERPTEQVDVISTGSLGLDIALGIGGLPRGRIIEIYGPESSGKTTMALHAIAEAQRKGGTCAFIDAEHALDPGYARKLGVDVDNLLISQPDAGEQALEIADTLVRSGAVDVLVVDSVAALVPRAELEGDMGDSHVGLHARLMSQALRKLTGSVSRSNTMLIFLNQIRLKIGVMFGSPESTTGGNALKFYASVRMDIRRIGSIKDKDEVTGNQTRVKVVKNKMAPPFRQVEFDIMYGEGISKVGELIDLGVKAGIVEKSGAWFSCDSQRIGQGRENAKQFLRDHPEMAADIERRVREQAGVVAEAMLVGPDEDGAEH.

69 to 76 (GPESSGKT) contributes to the ATP binding site.

Belongs to the RecA family.

The protein localises to the cytoplasm. Functionally, can catalyze the hydrolysis of ATP in the presence of single-stranded DNA, the ATP-dependent uptake of single-stranded DNA by duplex DNA, and the ATP-dependent hybridization of homologous single-stranded DNAs. It interacts with LexA causing its activation and leading to its autocatalytic cleavage. The chain is Protein RecA from Gluconacetobacter polyoxogenes (Acetobacter polyoxogenes).